A 304-amino-acid chain; its full sequence is UDP-3-O-acyl-N-acetylglucosamine deacetylase (304 aa).

3 residues coordinate Zn(2+): histidine 78, histidine 237, and aspartate 241. The Proton donor role is filled by histidine 264.

The protein belongs to the LpxC family. The cofactor is Zn(2+).

It carries out the reaction a UDP-3-O-[(3R)-3-hydroxyacyl]-N-acetyl-alpha-D-glucosamine + H2O = a UDP-3-O-[(3R)-3-hydroxyacyl]-alpha-D-glucosamine + acetate. It participates in glycolipid biosynthesis; lipid IV(A) biosynthesis; lipid IV(A) from (3R)-3-hydroxytetradecanoyl-[acyl-carrier-protein] and UDP-N-acetyl-alpha-D-glucosamine: step 2/6. Catalyzes the hydrolysis of UDP-3-O-myristoyl-N-acetylglucosamine to form UDP-3-O-myristoylglucosamine and acetate, the committed step in lipid A biosynthesis. This Polynucleobacter asymbioticus (strain DSM 18221 / CIP 109841 / QLW-P1DMWA-1) (Polynucleobacter necessarius subsp. asymbioticus) protein is UDP-3-O-acyl-N-acetylglucosamine deacetylase.